The primary structure comprises 365 residues: 2-aminoethylphosphonate--pyruvate transaminase (365 aa).

N6-(pyridoxal phosphate)lysine is present on Lys-194.

It belongs to the class-V pyridoxal-phosphate-dependent aminotransferase family. PhnW subfamily. In terms of assembly, homodimer. Requires pyridoxal 5'-phosphate as cofactor.

It catalyses the reaction (2-aminoethyl)phosphonate + pyruvate = phosphonoacetaldehyde + L-alanine. Its function is as follows. Involved in phosphonate degradation. The polypeptide is 2-aminoethylphosphonate--pyruvate transaminase (Bacillus cereus (strain ATCC 14579 / DSM 31 / CCUG 7414 / JCM 2152 / NBRC 15305 / NCIMB 9373 / NCTC 2599 / NRRL B-3711)).